We begin with the raw amino-acid sequence, 49 residues long: MRVNITLACTECGDRNYISKKNKRNNAERLELKKYCKRDKKSTLHRETK.

It belongs to the bacterial ribosomal protein bL33 family.

The protein is Large ribosomal subunit protein bL33A of Bacillus cytotoxicus (strain DSM 22905 / CIP 110041 / 391-98 / NVH 391-98).